The following is a 235-amino-acid chain: Large ribosomal subunit protein uL1 (235 aa).

It belongs to the universal ribosomal protein uL1 family. In terms of assembly, part of the 50S ribosomal subunit.

Binds directly to 23S rRNA. The L1 stalk is quite mobile in the ribosome, and is involved in E site tRNA release. Functionally, protein L1 is also a translational repressor protein, it controls the translation of the L11 operon by binding to its mRNA. The chain is Large ribosomal subunit protein uL1 from Desulfotalea psychrophila (strain LSv54 / DSM 12343).